Reading from the N-terminus, the 1987-residue chain is Transcription factor 20 (1987 aa).

A compositionally biased stretch (polar residues) spans 1-22; sequence MQSFREQSSYHGNQQSYPQEVH. 5 disordered regions span residues 1 to 79, 96 to 432, 446 to 481, 502 to 816, and 844 to 891; these read MQSF…QGYQ, DTVA…GNVP, LSPT…DPGL, LLSD…GTAR, and PHWG…SLSE. Residues 51–74 show a composition bias toward low complexity; the sequence is TGSSSSGRRGTAAAAAAMASETSG. Residue arginine 59 is modified to Omega-N-methylarginine. Residues 121-142 are compositionally biased toward polar residues; that stretch reads QGSSFGNQYASEGHVSQFQAQH. Residues 163–205 show a composition bias toward low complexity; the sequence is SAQYQQQASSQQQQQQQQQQQQQQQQQQQQVQQLRQQLYQSHQ. Over residues 206–235 the composition is skewed to polar residues; it reads PLPQTTGQPASGSSHLQPMQRPSTLPSSAG. Residues 248 to 277 are compositionally biased toward low complexity; sequence QSSASSSSSSSFPSPQRFSQSGQSYDGSYS. Residues 289 to 311 are compositionally biased toward polar residues; that stretch reads VGSNAQAYGTQSNYSYQPQSMKN. Lysine 316 is covalently cross-linked (Glycyl lysine isopeptide (Lys-Gly) (interchain with G-Cter in SUMO2)). Residues 322-354 show a composition bias toward low complexity; that stretch reads QQGQQQQQQQPQPQQQQPQQQQQQQQQQQHPPQ. Over residues 357-377 the composition is skewed to polar residues; that stretch reads MQYTNAATKMPLQSQVGQYNQ. Over residues 396-416 the composition is skewed to low complexity; it reads SNPSPAASVVQSPSCSSTPSP. Polar residues predominate over residues 417–432; that stretch reads LMQSGENLQCGQGNVP. Over residues 446–456 the composition is skewed to low complexity; sequence LSPTPSMMPSP. Residues serine 447 and serine 458 each carry the phosphoserine modification. Polar residues-rich tracts occupy residues 526–537, 566–576, and 585–605; these read SCTNSEGSSQPE, LSGQSTSSDTT, and AGSS…TSPA. Phosphoserine occurs at positions 567, 588, 603, and 612. A compositionally biased stretch (polar residues) spans 618–627; the sequence is TSLSSEGNTK. An N6-acetyllysine modification is found at lysine 631. The span at 645–657 shows a compositional bias: basic and acidic residues; the sequence is RVEKSGGQDKGSQ. Residues 666-682 are compositionally biased toward polar residues; it reads RPPSNSGVKEISHTSLP. At serine 669 the chain carries Phosphoserine. The segment covering 693 to 715 has biased composition (low complexity); sequence GNKNGDNNSSNHNGEGNGPSSHS. Residues 722–731 are compositionally biased toward polar residues; that stretch reads TGRTEPSKSP. Residues lysine 739, lysine 762, lysine 777, lysine 852, lysine 861, and lysine 873 each participate in a glycyl lysine isopeptide (Lys-Gly) (interchain with G-Cter in SUMO2) cross-link. Basic and acidic residues predominate over residues 761 to 777; sequence EKGDFGSHGERKGRNEK. Serine 900 bears the Phosphoserine mark. Glycyl lysine isopeptide (Lys-Gly) (interchain with G-Cter in SUMO2) cross-links involve residues lysine 949 and lysine 951. The tract at residues 949-1065 is disordered; sequence KLKSQSGQIK…GDPHHMNPHM (117 aa). Lysine 958 is covalently cross-linked (Glycyl lysine isopeptide (Lys-Gly) (interchain with G-Cter in SUMO1); alternate). Residue lysine 958 forms a Glycyl lysine isopeptide (Lys-Gly) (interchain with G-Cter in SUMO2); alternate linkage. The span at 974–989 shows a compositional bias: basic and acidic residues; sequence KSGDHCHPTSIKHETY. Lysine 985 is covalently cross-linked (Glycyl lysine isopeptide (Lys-Gly) (interchain with G-Cter in SUMO2)). 2 positions are modified to phosphoserine: serine 994 and serine 1033. A Glycyl lysine isopeptide (Lys-Gly) (interchain with G-Cter in SUMO2) cross-link involves residue lysine 1043. Arginine 1052 bears the Omega-N-methylarginine mark. Position 1081 is a phosphoserine (serine 1081). Glycyl lysine isopeptide (Lys-Gly) (interchain with G-Cter in SUMO2) cross-links involve residues lysine 1114, lysine 1126, lysine 1165, lysine 1201, lysine 1206, lysine 1211, lysine 1238, lysine 1259, lysine 1295, and lysine 1302. Residues 1136–1372 are disordered; the sequence is VIAAAQHRQE…SPAKTKILPP (237 aa). Residues 1158 to 1170 show a composition bias toward basic and acidic residues; it reads DRVRSPLKNDKDG. The interval 1198–1219 is leucine-zipper; sequence LPAKSMELKHSSQKLQESCWDL. The short motif at 1282 to 1295 is the Nuclear localization signal element; that stretch reads RRRVRSFISPIPSK. Composition is skewed to basic and acidic residues over residues 1305–1321 and 1332–1346; these read NADD…EGAD and HSQD…DSSK. Residue serine 1333 is modified to Phosphoserine. Lysine 1337 is covalently cross-linked (Glycyl lysine isopeptide (Lys-Gly) (interchain with G-Cter in SUMO2)). Serine 1363 is subject to Phosphoserine. Residue lysine 1366 forms a Glycyl lysine isopeptide (Lys-Gly) (interchain with G-Cter in SUMO2) linkage. A Phosphoserine modification is found at serine 1389. The tract at residues 1415-1434 is disordered; that stretch reads SLKSGPPEGGTVATQEAEME. Residues lysine 1417, lysine 1437, lysine 1456, and lysine 1474 each participate in a glycyl lysine isopeptide (Lys-Gly) (interchain with G-Cter in SUMO2) cross-link. The interval 1446-1636 is disordered; that stretch reads SVTNQESNVE…KQAVPIVEPQ (191 aa). Residues 1463–1479 show a composition bias toward basic and acidic residues; sequence EEWRGSGDDKVKTEAHV. Over residues 1481–1501 the composition is skewed to polar residues; that stretch reads TASTGKEPSGTMTSTASQKPG. Lysine 1538 is covalently cross-linked (Glycyl lysine isopeptide (Lys-Gly) (interchain with G-Cter in SUMO2)). Serine 1550 carries the phosphoserine modification. Residue lysine 1552 forms a Glycyl lysine isopeptide (Lys-Gly) (interchain with G-Cter in SUMO2) linkage. The a.T hook DNA-binding region spans 1565-1579; the sequence is GKKKGRPIGSVNKQK. A compositionally biased stretch (pro residues) spans 1584–1594; sequence QPPPPPQPPQM. A Nuclear localization signal motif is present at residues 1604–1628; the sequence is KPKKQRQRRERRKPGAQPRKRKTKQ. The span at 1606-1627 shows a compositional bias: basic residues; sequence KKQRQRRERRKPGAQPRKRKTK. A Glycyl lysine isopeptide (Lys-Gly) (interchain with G-Cter in SUMO2) cross-link involves residue lysine 1641. Disordered regions lie at residues 1685–1710 and 1760–1865; these read QTKL…SKVL and TLPK…GPEL. The residue at position 1697 (serine 1697) is a Phosphoserine. A phosphothreonine mark is found at threonine 1699, threonine 1790, and threonine 1792. The Nuclear localization signal signature appears at 1812–1819; sequence RFKRRHRS. Polar residues predominate over residues 1850–1859; the sequence is DTKPSVPTTS. A C2HC pre-PHD-type; degenerate zinc finger spans residues 1856-1892; that stretch reads PTTSEGGPELELQIPELPLDSNEFWVHEGCILWANGI. Residues 1912 to 1960 form a PHD-type zinc finger; that stretch reads MKCSHCQEAGATLGCYNKGCSFRYHYPCAIDADCLLHEENFSVRCPKHK. The disordered stretch occupies residues 1966 to 1987; the sequence is PLPPLQNKTAKGSLSTEQSERG. Residues 1971-1987 show a composition bias toward polar residues; that stretch reads QNKTAKGSLSTEQSERG.

In terms of assembly, homodimer. Interacts with RNF4 and JUN. Binds to the regulatory region of MMP3. As to expression, expressed in brain, lung, liver, kidney and testes.

The protein resides in the nucleus. Functionally, transcriptional activator that binds to the regulatory region of MMP3 and thereby controls stromelysin expression. It stimulates the activity of various transcriptional activators such as JUN, SP1, PAX6 and ETS1, suggesting a function as a coactivator. In Mus musculus (Mouse), this protein is Transcription factor 20 (Tcf20).